Here is a 787-residue protein sequence, read N- to C-terminus: Glycine-rich domain-containing protein 2 (787 aa).

As to expression, expressed in leaves, inflorescences, buds, flowers and immature siliques.

Involved in development and stress responses, probably through an auxin-dependent mechanism. This Arabidopsis thaliana (Mouse-ear cress) protein is Glycine-rich domain-containing protein 2.